Consider the following 363-residue polypeptide: Peptide chain release factor 1 (363 aa).

The residue at position 237 (Q237) is an N5-methylglutamine. Basic and acidic residues predominate over residues 286 to 296; the sequence is EKRRSAEESTR. Residues 286–305 form a disordered region; the sequence is EKRRSAEESTRRSLVASGDR.

The protein belongs to the prokaryotic/mitochondrial release factor family. Methylated by PrmC. Methylation increases the termination efficiency of RF1.

It is found in the cytoplasm. Peptide chain release factor 1 directs the termination of translation in response to the peptide chain termination codons UAG and UAA. The polypeptide is Peptide chain release factor 1 (Shewanella baltica (strain OS155 / ATCC BAA-1091)).